The sequence spans 187 residues: Elongation factor P (187 aa).

The protein belongs to the elongation factor P family.

The protein localises to the cytoplasm. Its pathway is protein biosynthesis; polypeptide chain elongation. Functionally, involved in peptide bond synthesis. Stimulates efficient translation and peptide-bond synthesis on native or reconstituted 70S ribosomes in vitro. Probably functions indirectly by altering the affinity of the ribosome for aminoacyl-tRNA, thus increasing their reactivity as acceptors for peptidyl transferase. The polypeptide is Elongation factor P (Nocardia farcinica (strain IFM 10152)).